Here is a 489-residue protein sequence, read N- to C-terminus: Glutamyl-tRNA(Gln) amidotransferase subunit A (489 aa).

Catalysis depends on charge relay system residues lysine 77 and serine 152. The active-site Acyl-ester intermediate is the serine 176.

It belongs to the amidase family. GatA subfamily. In terms of assembly, heterotrimer of A, B and C subunits.

It carries out the reaction L-glutamyl-tRNA(Gln) + L-glutamine + ATP + H2O = L-glutaminyl-tRNA(Gln) + L-glutamate + ADP + phosphate + H(+). Allows the formation of correctly charged Gln-tRNA(Gln) through the transamidation of misacylated Glu-tRNA(Gln) in organisms which lack glutaminyl-tRNA synthetase. The reaction takes place in the presence of glutamine and ATP through an activated gamma-phospho-Glu-tRNA(Gln). This Protochlamydia amoebophila (strain UWE25) protein is Glutamyl-tRNA(Gln) amidotransferase subunit A.